We begin with the raw amino-acid sequence, 283 residues long: NAD kinase (283 aa).

The active-site Proton acceptor is the aspartate 67. Residues 67–68 (DG), 141–142 (ND), arginine 152, aspartate 171, 182–187 (TAYSLS), and glutamine 241 contribute to the NAD(+) site.

Belongs to the NAD kinase family. A divalent metal cation is required as a cofactor.

It localises to the cytoplasm. The enzyme catalyses NAD(+) + ATP = ADP + NADP(+) + H(+). Involved in the regulation of the intracellular balance of NAD and NADP, and is a key enzyme in the biosynthesis of NADP. Catalyzes specifically the phosphorylation on 2'-hydroxyl of the adenosine moiety of NAD to yield NADP. The sequence is that of NAD kinase from Heliobacterium modesticaldum (strain ATCC 51547 / Ice1).